The primary structure comprises 376 residues: Chaperone protein DnaJ (376 aa).

A J domain is found at 4 to 69 (DFYETLGVQK…QKRAAYDRFG (66 aa)). The segment at 133-211 (GKTAQIRVPA…CAGQGRVTEE (79 aa)) adopts a CR-type zinc-finger fold. 8 residues coordinate Zn(2+): Cys146, Cys149, Cys163, Cys166, Cys185, Cys188, Cys199, and Cys202. 4 CXXCXGXG motif repeats span residues 146–153 (CTECSGSG), 163–170 (CSMCHGHG), 185–192 (CPQCQGRG), and 199–206 (CPKCAGQG).

It belongs to the DnaJ family. In terms of assembly, homodimer. Zn(2+) serves as cofactor.

The protein localises to the cytoplasm. Its function is as follows. Participates actively in the response to hyperosmotic and heat shock by preventing the aggregation of stress-denatured proteins and by disaggregating proteins, also in an autonomous, DnaK-independent fashion. Unfolded proteins bind initially to DnaJ; upon interaction with the DnaJ-bound protein, DnaK hydrolyzes its bound ATP, resulting in the formation of a stable complex. GrpE releases ADP from DnaK; ATP binding to DnaK triggers the release of the substrate protein, thus completing the reaction cycle. Several rounds of ATP-dependent interactions between DnaJ, DnaK and GrpE are required for fully efficient folding. Also involved, together with DnaK and GrpE, in the DNA replication of plasmids through activation of initiation proteins. This is Chaperone protein DnaJ from Mesorhizobium japonicum (strain LMG 29417 / CECT 9101 / MAFF 303099) (Mesorhizobium loti (strain MAFF 303099)).